Reading from the N-terminus, the 183-residue chain is Negative modulator of initiation of replication (183 aa).

The interval 90–91 (AV) is interaction with DNA.

The protein belongs to the SeqA family. Homodimer. Polymerizes to form helical filaments.

The protein localises to the cytoplasm. Its function is as follows. Negative regulator of replication initiation, which contributes to regulation of DNA replication and ensures that replication initiation occurs exactly once per chromosome per cell cycle. Binds to pairs of hemimethylated GATC sequences in the oriC region, thus preventing assembly of replication proteins and re-initiation at newly replicated origins. Repression is relieved when the region becomes fully methylated. This chain is Negative modulator of initiation of replication, found in Shewanella oneidensis (strain ATCC 700550 / JCM 31522 / CIP 106686 / LMG 19005 / NCIMB 14063 / MR-1).